A 175-amino-acid polypeptide reads, in one-letter code: ATP synthase subunit b (175 aa).

Residues Leu20–Trp40 traverse the membrane as a helical segment.

The protein belongs to the ATPase B chain family. As to quaternary structure, F-type ATPases have 2 components, F(1) - the catalytic core - and F(0) - the membrane proton channel. F(1) has five subunits: alpha(3), beta(3), gamma(1), delta(1), epsilon(1). F(0) has four main subunits: a(1), b(2) and c(10-14). The alpha and beta chains form an alternating ring which encloses part of the gamma chain. F(1) is attached to F(0) by a central stalk formed by the gamma and epsilon chains, while a peripheral stalk is formed by the delta and b chains.

The protein localises to the cell inner membrane. In terms of biological role, f(1)F(0) ATP synthase produces ATP from ADP in the presence of a proton or sodium gradient. F-type ATPases consist of two structural domains, F(1) containing the extramembraneous catalytic core and F(0) containing the membrane proton channel, linked together by a central stalk and a peripheral stalk. During catalysis, ATP synthesis in the catalytic domain of F(1) is coupled via a rotary mechanism of the central stalk subunits to proton translocation. Its function is as follows. Component of the F(0) channel, it forms part of the peripheral stalk, linking F(1) to F(0). The sequence is that of ATP synthase subunit b from Pelodictyon phaeoclathratiforme (strain DSM 5477 / BU-1).